We begin with the raw amino-acid sequence, 434 residues long: Chaperone SurA (434 aa).

An N-terminal signal peptide occupies residues 1-22; that stretch reads MKPSKHLIFALFALAISQPTMA. PpiC domains lie at 173-274 and 283-383; these read DVEY…KIMD and IEEV…QLEE.

The protein localises to the periplasm. The catalysed reaction is [protein]-peptidylproline (omega=180) = [protein]-peptidylproline (omega=0). Functionally, chaperone involved in the correct folding and assembly of outer membrane proteins. Recognizes specific patterns of aromatic residues and the orientation of their side chains, which are found more frequently in integral outer membrane proteins. May act in both early periplasmic and late outer membrane-associated steps of protein maturation. The chain is Chaperone SurA from Shewanella oneidensis (strain ATCC 700550 / JCM 31522 / CIP 106686 / LMG 19005 / NCIMB 14063 / MR-1).